A 624-amino-acid polypeptide reads, in one-letter code: Interleukin-1 receptor-associated kinase-like 2 (624 aa).

A Death domain is found at L13–K94. In terms of domain architecture, Protein kinase spans F210–A475. ATP is bound by residues I216–I224, K237, and K337–N340. Disordered regions lie at residues S508–L536 and R549–W593. Polar residues predominate over residues G558 to E577.

Belongs to the protein kinase superfamily. TKL Ser/Thr protein kinase family. Pelle subfamily. Interacts with MYD88. IL-1 stimulation leads to the formation of a signaling complex which dissociates from the IL-1 receptor following the binding of PELI1.

Binds to the IL-1 type I receptor following IL-1 engagement, triggering intracellular signaling cascades leading to transcriptional up-regulation and mRNA stabilization. The sequence is that of Interleukin-1 receptor-associated kinase-like 2 (Irak2) from Rattus norvegicus (Rat).